Here is a 285-residue protein sequence, read N- to C-terminus: 2,3,4,5-tetrahydropyridine-2,6-dicarboxylate N-succinyltransferase (285 aa).

Positions 111 and 148 each coordinate substrate.

It belongs to the transferase hexapeptide repeat family. As to quaternary structure, homotrimer.

Its subcellular location is the cytoplasm. The enzyme catalyses (S)-2,3,4,5-tetrahydrodipicolinate + succinyl-CoA + H2O = (S)-2-succinylamino-6-oxoheptanedioate + CoA. It participates in amino-acid biosynthesis; L-lysine biosynthesis via DAP pathway; LL-2,6-diaminopimelate from (S)-tetrahydrodipicolinate (succinylase route): step 1/3. The protein is 2,3,4,5-tetrahydropyridine-2,6-dicarboxylate N-succinyltransferase of Rhizobium rhizogenes (strain K84 / ATCC BAA-868) (Agrobacterium radiobacter).